Reading from the N-terminus, the 194-residue chain is 7-methyl-GTP pyrophosphatase (194 aa).

Aspartate 69 functions as the Proton acceptor in the catalytic mechanism.

Belongs to the Maf family. YceF subfamily. Requires a divalent metal cation as cofactor.

The protein localises to the cytoplasm. The enzyme catalyses N(7)-methyl-GTP + H2O = N(7)-methyl-GMP + diphosphate + H(+). Nucleoside triphosphate pyrophosphatase that hydrolyzes 7-methyl-GTP (m(7)GTP). May have a dual role in cell division arrest and in preventing the incorporation of modified nucleotides into cellular nucleic acids. The sequence is that of 7-methyl-GTP pyrophosphatase (yceF1) from Salmonella paratyphi A (strain ATCC 9150 / SARB42).